The following is a 211-amino-acid chain: Endonuclease III (211 aa).

The region spanning 111–130 (AHALESLPGVGHKTANVVLN) is the HhH domain. Positions 190, 197, 200, and 206 each coordinate [4Fe-4S] cluster.

This sequence belongs to the Nth/MutY family. [4Fe-4S] cluster is required as a cofactor.

The enzyme catalyses 2'-deoxyribonucleotide-(2'-deoxyribose 5'-phosphate)-2'-deoxyribonucleotide-DNA = a 3'-end 2'-deoxyribonucleotide-(2,3-dehydro-2,3-deoxyribose 5'-phosphate)-DNA + a 5'-end 5'-phospho-2'-deoxyribonucleoside-DNA + H(+). Its function is as follows. DNA repair enzyme that has both DNA N-glycosylase activity and AP-lyase activity. The DNA N-glycosylase activity releases various damaged pyrimidines from DNA by cleaving the N-glycosidic bond, leaving an AP (apurinic/apyrimidinic) site. The AP-lyase activity cleaves the phosphodiester bond 3' to the AP site by a beta-elimination, leaving a 3'-terminal unsaturated sugar and a product with a terminal 5'-phosphate. The protein is Endonuclease III of Treponema pallidum (strain Nichols).